The chain runs to 160 residues: Transcription antitermination protein NusB (160 aa).

Belongs to the NusB family.

Involved in transcription antitermination. Required for transcription of ribosomal RNA (rRNA) genes. Binds specifically to the boxA antiterminator sequence of the ribosomal RNA (rrn) operons. The protein is Transcription antitermination protein NusB of Rhizobium rhizogenes (strain K84 / ATCC BAA-868) (Agrobacterium radiobacter).